The sequence spans 355 residues: Galectin-9 (355 aa).

Galectin domains are found at residues 17–148 and 227–355; these read FTGM…ISFQ and FFTS…HVQT. A beta-D-galactoside contacts are provided by residues N48, H61, R65, N75, 82-88, H267, R271, T281, and 287-293; these read WGTEERK and WGSEERS.

It localises to the cytoplasm. Its subcellular location is the nucleus. The protein localises to the secreted. Its function is as follows. Binds galactosides. Has high affinity for the Forssman pentasaccharide. Ligand for HAVCR2/TIM3. Binding to HAVCR2 induces T-helper type 1 lymphocyte (Th1) death. Also stimulates bactericidal activity in infected macrophages by causing macrophage activation and IL1B secretion which restricts intracellular bacterial growth. Ligand for P4HB; the interaction retains P4HB at the cell surface of Th2 T helper cells, increasing disulfide reductase activity at the plasma membrane, altering the plasma membrane redox state and enhancing cell migration. Ligand for CD44; the interaction enhances binding of SMAD3 to the FOXP3 promoter, leading to up-regulation of FOXP3 expression and increased induced regulatory T (iTreg) cell stability and suppressive function. Promotes ability of mesenchymal stromal cells to suppress T-cell proliferation. Expands regulatory T-cells and induces cytotoxic T-cell apoptosis following virus infection. Activates ERK1/2 phosphorylation inducing cytokine (IL-6, IL-8, IL-12) and chemokine (CCL2) production in mast and dendritic cells. Inhibits degranulation and induces apoptosis of mast cells. Induces maturation and migration of dendritic cells. Inhibits natural killer (NK) cell function. Can transform NK cell phenotype from peripheral to decidual during pregnancy. Astrocyte derived galectin-9 enhances microglial TNF production. May play a role in thymocyte-epithelial interactions relevant to the biology of the thymus. May provide the molecular basis for urate flux across cell membranes, allowing urate that is formed during purine metabolism to efflux from cells and serving as an electrogenic transporter that plays an important role in renal and gastrointestinal urate excretion. Highly selective to the anion urate. The chain is Galectin-9 (LGALS9) from Bos taurus (Bovine).